The chain runs to 263 residues: Probable ABC transporter permease protein slr1045 (263 aa).

A run of 7 helical transmembrane segments spans residues 12–32 (LWFQ…LHIL), 52–72 (SMAI…IQVA), 97–117 (APVL…AAEI), 140–162 (LVVP…SLFV), 167–186 (GLVI…LNSV), 192–212 (LWDV…IAII), and 234–254 (AVVT…WLMF).

This sequence belongs to the MlaE permease family.

Its subcellular location is the cell membrane. Functionally, could be part of an ABC transporter complex. This is Probable ABC transporter permease protein slr1045 from Synechocystis sp. (strain ATCC 27184 / PCC 6803 / Kazusa).